The sequence spans 499 residues: GTPase Der (499 aa).

Positions 3–166 (PVIALVGRPN…QALGIFPKDN (164 aa)) constitute an EngA-type G 1 domain. Residues 9-16 (GRPNVGKS), 56-60 (DTGGI), and 118-121 (NKVD) each bind GTP. Residues 166-199 (NADENAEGEEGGELAEGEEVVAEGQEPKRIPGPS) are disordered. Over residues 168–186 (DENAEGEEGGELAEGEEVV) the composition is skewed to acidic residues. The segment covering 190 to 199 (QEPKRIPGPS) has biased composition (basic and acidic residues). An EngA-type G 2 domain is found at 204 to 377 (IKIAIIGRPN…SVQAAFKSAI (174 aa)). GTP contacts are provided by residues 210–217 (GRPNVGKS), 257–261 (DTAGV), and 322–325 (NKWD). The 85-residue stretch at 378–462 (TRWPTSRLTQ…PIRIEYKGGD (85 aa)) folds into the KH-like domain. Residues 459–472 (KGGDNPYEGKKNTL) are compositionally biased toward basic and acidic residues. The tract at residues 459–499 (KGGDNPYEGKKNTLTDRQVNKKRRLMSHHKKAEKKRRDKKR) is disordered. Positions 478–499 (NKKRRLMSHHKKAEKKRRDKKR) are enriched in basic residues.

The protein belongs to the TRAFAC class TrmE-Era-EngA-EngB-Septin-like GTPase superfamily. EngA (Der) GTPase family. In terms of assembly, associates with the 50S ribosomal subunit.

Functionally, GTPase that plays an essential role in the late steps of ribosome biogenesis. The sequence is that of GTPase Der from Stutzerimonas stutzeri (strain A1501) (Pseudomonas stutzeri).